Here is a 147-residue protein sequence, read N- to C-terminus: Lipoprotein signal peptidase (147 aa).

Transmembrane regions (helical) follow at residues 10 to 30 (ISIF…IKFL), 34 to 54 (GIVK…GTAF), 59 to 79 (FLGS…LVYM), and 87 to 107 (WFIY…RLIY). Residues D112 and D130 contribute to the active site. The helical transmembrane segment at 121-141 (LHWPAFNVADSAISIGIVLFV) threads the bilayer.

This sequence belongs to the peptidase A8 family.

The protein resides in the cell inner membrane. The enzyme catalyses Release of signal peptides from bacterial membrane prolipoproteins. Hydrolyzes -Xaa-Yaa-Zaa-|-(S,diacylglyceryl)Cys-, in which Xaa is hydrophobic (preferably Leu), and Yaa (Ala or Ser) and Zaa (Gly or Ala) have small, neutral side chains.. It functions in the pathway protein modification; lipoprotein biosynthesis (signal peptide cleavage). In terms of biological role, this protein specifically catalyzes the removal of signal peptides from prolipoproteins. The protein is Lipoprotein signal peptidase of Thermodesulfovibrio yellowstonii (strain ATCC 51303 / DSM 11347 / YP87).